The sequence spans 155 residues: Ribosomal RNA large subunit methyltransferase H (155 aa).

S-adenosyl-L-methionine contacts are provided by residues leucine 73, glycine 104, and 123–128; that span reads LSPLTL.

The protein belongs to the RNA methyltransferase RlmH family. Homodimer.

The protein resides in the cytoplasm. The enzyme catalyses pseudouridine(1915) in 23S rRNA + S-adenosyl-L-methionine = N(3)-methylpseudouridine(1915) in 23S rRNA + S-adenosyl-L-homocysteine + H(+). Specifically methylates the pseudouridine at position 1915 (m3Psi1915) in 23S rRNA. The chain is Ribosomal RNA large subunit methyltransferase H from Pseudomonas syringae pv. tomato (strain ATCC BAA-871 / DC3000).